Reading from the N-terminus, the 642-residue chain is Sterol O-acyltransferase 2 (642 aa).

The tract at residues 174–194 is disordered; it reads KSSPDAVDSVGKNDGAAPTTV. Residues Ser-175 and Ser-176 each carry the phosphoserine modification. The next 5 helical transmembrane spans lie at 215–235, 292–312, 404–424, 442–462, and 485–505; these read FSGLYVAFWMAIAFGAVKALI, TGWIFTSIYEFLFVIFYMYLT, ISAKSFFWFTMFPTLIYQIEY, IFGTIFLMMIDAQILMYPVAM, and LLVDIVPGFIVMYILDFYLIW. Positions 523–529 match the FYXDWWN motif motif; it reads FYGDWWN. Helical transmembrane passes span 567–587 and 622–642; these read ATLMTFFLSSVVHELAMYVIF and VIFWLGICMGPSVMCTLYLTF. The active site involves His-579.

Belongs to the membrane-bound acyltransferase family. Sterol o-acyltransferase subfamily.

The protein localises to the endoplasmic reticulum membrane. The enzyme catalyses ergosterol + an acyl-CoA = ergosteryl ester + CoA. It carries out the reaction zymosterol + an acyl-CoA = zymosterol ester + CoA. Sterol O-acyltransferase that catalyzes the formation of stery esters. This is Sterol O-acyltransferase 2 from Saccharomyces cerevisiae (strain ATCC 204508 / S288c) (Baker's yeast).